Reading from the N-terminus, the 190-residue chain is Xanthine phosphoribosyltransferase (190 aa).

Leucine 20 and asparagine 27 together coordinate xanthine. 128 to 132 (ANGKA) is a 5-phospho-alpha-D-ribose 1-diphosphate binding site. Lysine 156 contributes to the xanthine binding site.

Belongs to the purine/pyrimidine phosphoribosyltransferase family. Xpt subfamily. In terms of assembly, homodimer.

The protein resides in the cytoplasm. The catalysed reaction is XMP + diphosphate = xanthine + 5-phospho-alpha-D-ribose 1-diphosphate. The protein operates within purine metabolism; XMP biosynthesis via salvage pathway; XMP from xanthine: step 1/1. Converts the preformed base xanthine, a product of nucleic acid breakdown, to xanthosine 5'-monophosphate (XMP), so it can be reused for RNA or DNA synthesis. The polypeptide is Xanthine phosphoribosyltransferase (Stutzerimonas stutzeri (strain A1501) (Pseudomonas stutzeri)).